The sequence spans 217 residues: MITWYGHACFKVDNVLIDPFVPNPLCDLPYDEIMEGVEVIAVTHGHADHLGNAEELAKTYNVPVVTNHEISVYLSERGVCAEGMNIGGTIEINGAKLTMVKAEHSSDISPTISGGVAAGFIINDRVYHAGDTGLFGDMELIGEIYAPQIALLPIGGRYTMGIDEALVAIELIYPEIVIPMHYNTFPLIEVDVNEFVKKAEALGVEVIVPKIGEPLEL.

This sequence belongs to the UPF0173 family.

In Methanocaldococcus jannaschii (strain ATCC 43067 / DSM 2661 / JAL-1 / JCM 10045 / NBRC 100440) (Methanococcus jannaschii), this protein is UPF0173 metal-dependent hydrolase MJ1163.